Here is a 229-residue protein sequence, read N- to C-terminus: tRNA (guanosine(18)-2'-O)-methyltransferase (229 aa).

Residues T96, I139, and L148 each contribute to the S-adenosyl-L-methionine site.

Belongs to the class IV-like SAM-binding methyltransferase superfamily. RNA methyltransferase TrmH family.

It catalyses the reaction guanosine(18) in tRNA + S-adenosyl-L-methionine = 2'-O-methylguanosine(18) in tRNA + S-adenosyl-L-homocysteine + H(+). Functionally, catalyzes the 2'-O methylation of guanosine at position 18 in tRNA. The sequence is that of tRNA (guanosine(18)-2'-O)-methyltransferase from Escherichia coli O157:H7.